Consider the following 414-residue polypeptide: MLRRLVISIMLGMVSALIVWLFHQAMLGLEWLLFSRTDGSLVAAAASITGWRRALTPALGGLAAGLLLWAYQRYQHRKPSAPTDYMEAIEIGDGRLDVSASLVKSLASLLVVSSGSAIGREGAMVLLAALFASVFAQRYAKPKEWKLWVACGAAAGMASAYHAPLAGSLFIAEILFGTLMLASLGPVVIAAVSALLTINLLQGGQETLYQVQTLPSPWPVQYFLMALLGLMAGFSGPLFLKAMAASSHAFRSLNLLPPLQLALGGIIVGLLSLIFPEVWGNGYSVVQSLLTTPPGVLLIGGILICKLLAVLASSGSGAPGGVFTPTLFVGAALGMLCGQIFSLWPVLGDNIGLLMALTGMATLLAATTHAPIMAALMVCEMTGEYTLLPGLLLSCVIATTIARWLRPISVYRSH.

The next 11 helical transmembrane spans lie at 5–25, 54–74, 116–136, 147–167, 169–189, 220–240, 255–275, 292–312, 327–347, 353–373, and 381–401; these read LVIS…FHQA, ALTP…YQRY, SAIG…SVFA, LWVA…PLAG, LFIA…PVVI, VQYF…PLFL, LLPP…SLIF, TPPG…AVLA, LFVG…WPVL, LLMA…APIM, and MTGE…ATTI.

It belongs to the chloride channel (TC 2.A.49) family. ClcB subfamily.

Its subcellular location is the cell inner membrane. Functionally, probably acts as an electrical shunt for an outwardly-directed proton pump that is linked to amino acid decarboxylation, as part of the extreme acid resistance (XAR) response. The sequence is that of Voltage-gated ClC-type chloride channel ClcB from Yersinia pestis.